We begin with the raw amino-acid sequence, 339 residues long: Peroxidase 29 (339 aa).

The signal sequence occupies residues 1-28 (MKPKSKVAESTAASCFLVMSLLCSCIIG). 4 disulfides stabilise this stretch: Cys47-Cys127, Cys80-Cys85, Cys133-Cys335, and Cys213-Cys242. Catalysis depends on His78, which acts as the Proton acceptor. Positions 79, 82, 84, 86, and 88 each coordinate Ca(2+). A substrate-binding site is contributed by Pro176. His206 lines the heme b pocket. Thr207 is a binding site for Ca(2+). Asn224 is a glycosylation site (N-linked (GlcNAc...) asparagine). Ca(2+)-binding residues include Asp260, Thr262, and Asp267.

Belongs to the peroxidase family. Classical plant (class III) peroxidase subfamily. Heme b is required as a cofactor. Requires Ca(2+) as cofactor.

It localises to the secreted. It catalyses the reaction 2 a phenolic donor + H2O2 = 2 a phenolic radical donor + 2 H2O. In terms of biological role, removal of H(2)O(2), oxidation of toxic reductants, biosynthesis and degradation of lignin, suberization, auxin catabolism, response to environmental stresses such as wounding, pathogen attack and oxidative stress. These functions might be dependent on each isozyme/isoform in each plant tissue. In Arabidopsis thaliana (Mouse-ear cress), this protein is Peroxidase 29 (PER29).